We begin with the raw amino-acid sequence, 1059 residues long: Nonsense-mediated mRNA decay factor SMG7 (1059 aa).

TPR repeat units follow at residues 149 to 183 and 184 to 217; these read DQQS…LGDL and ARYK…WPAS. Residues 806–817 show a composition bias toward polar residues; sequence SHVSPAHSQSTS. 4 disordered regions span residues 806-826, 927-955, 987-1015, and 1040-1059; these read SHVS…KWSP, HLGP…SGNN, SGKP…QVPT, and STQL…RHFV.

In terms of assembly, interacts with EXA1. As to expression, expressed in flowers and at lower levels in stems and leaves.

It localises to the cytoplasm. The protein localises to the P-body. Plays multiple roles in growth and development. Involved in nonsense-mediated mRNA decay (NMD). May provide a link to the mRNA degradation machinery to initiate NMD and serve as an adapter for UPF proteins function. Required for meiotic progression through anaphase II of pollen mother cells. May counteract cyclin-dependent kinase (CDK) activity at the end of meiosis. May play a role in plant defense through its involvement in NMD. Together with EXA1, helps to restrict cell death induction during pathogen infection in a salicylic acid- (SA) and reactive oxygen species- (ROS) independent manner. The sequence is that of Nonsense-mediated mRNA decay factor SMG7 from Arabidopsis thaliana (Mouse-ear cress).